We begin with the raw amino-acid sequence, 142 residues long: HTH-type transcriptional regulator MntR (142 aa).

Positions 1–63 (MTTPSMEDYI…YEKYRGLVLT (63 aa)) constitute an HTH dtxR-type domain. Residues Asp8, Glu11, His77, Glu99, Glu102, and His103 each coordinate Cd(2+). Mn(2+) is bound by residues Asp8, Glu11, His77, Glu99, Glu102, and His103.

It belongs to the DtxR/MntR family. Homodimer.

The protein localises to the cytoplasm. Its activity is regulated as follows. DNA binding is strongly activated by Mn(2+) and Cd(2+), but it is poorly activated by non-cognate metal cations, including Co(2+), Fe(2+), Ni(2+), Ca(2+) and Zn(2+). In the strict absence of divalent transition metal ions, MntR has a low affinity for DNA. Central regulator of manganese homeostasis that regulates the expression of both manganese uptake and efflux systems. In the presence of high levels of manganese, it mediates repression of the manganese uptake systems MntH and MntABCD and activation of the efflux systems MneP and MneS. Binds with high affinity to the regulatory regions of its target genes. The manganese concentration required for activation of efflux is higher than that for repression of uptake. The sequence is that of HTH-type transcriptional regulator MntR from Bacillus subtilis (strain 168).